The following is a 472-amino-acid chain: Methanethiol oxidase (472 aa).

An N-acetylalanine modification is found at A2. The residue at position 467 (S467) is a Phosphoserine.

It belongs to the selenium-binding protein family. Interacts with USP33. The N-terminus is blocked.

It is found in the nucleus. Its subcellular location is the cytoplasm. The protein resides in the cytosol. The protein localises to the membrane. It carries out the reaction methanethiol + O2 + H2O = hydrogen sulfide + formaldehyde + H2O2 + H(+). It participates in organosulfur degradation. Catalyzes the oxidation of methanethiol, an organosulfur compound known to be produced in substantial amounts by gut bacteria. Selenium-binding protein which may be involved in the sensing of reactive xenobiotics in the cytoplasm. May be involved in intra-Golgi protein transport. This Bos taurus (Bovine) protein is Methanethiol oxidase (SELENBP1).